The sequence spans 208 residues: MKGLFVTIEGPEGSGKTTLIKSLLPYFEQKAQKVMATREPGGIAISEDIRTILHKQEYTMMEARTEALLYAAARRQHLVEKVMPALNEDYLVLCDRFIDSSLAYQGYARGLGMDKIFEINRFATEDCMPSLTIYLDIEPEVGLARIEKDAGREVNRLDMEDISFHKRVREGYLQVVERFSDRIVLVNADQPMEKLIEEVVQIIEDKLL.

Residue 10-17 coordinates ATP; the sequence is GPEGSGKT.

It belongs to the thymidylate kinase family.

It carries out the reaction dTMP + ATP = dTDP + ADP. Phosphorylation of dTMP to form dTDP in both de novo and salvage pathways of dTTP synthesis. This chain is Thymidylate kinase, found in Bacillus cereus (strain ATCC 14579 / DSM 31 / CCUG 7414 / JCM 2152 / NBRC 15305 / NCIMB 9373 / NCTC 2599 / NRRL B-3711).